The chain runs to 136 residues: T-cell receptor alpha chain constant (136 aa).

The Ig-like C1-type domain occupies serine 19–methionine 103. Cysteine 22 and cysteine 72 are oxidised to a cystine. 3 N-linked (GlcNAc...) asparagine glycosylation sites follow: asparagine 66, asparagine 80, and asparagine 109. Positions cysteine 90–serine 111 are connecting peptide. A helical membrane pass occupies residues serine 111 to leucine 131. At arginine 132–serine 136 the chain is on the cytoplasmic side.

In terms of assembly, alpha-beta TR is a heterodimer composed of an alpha and beta chain; disulfide-linked. The alpha-beta TR is associated with the transmembrane signaling CD3 coreceptor proteins to form the TR-CD3 (TcR or TCR). The assembly of alpha-beta TR heterodimers with CD3 occurs in the endoplasmic reticulum where a single alpha-beta TR heterodimer associates with one CD3D-CD3E heterodimer, one CD3G-CD3E heterodimer and one CD247 homodimer forming a stable octameric structure. CD3D-CD3E and CD3G-CD3E heterodimers preferentially associate with TR alpha and TR beta chains, respectively. The association of the CD247 homodimer is the last step of TcR assembly in the endoplasmic reticulum and is required for transport to the cell surface.

Its subcellular location is the cell membrane. In terms of biological role, constant region of T cell receptor (TR) alpha chain. Alpha-beta T cell receptors are antigen specific receptors which are essential to the immune response and are present on the cell surface of T lymphocytes. Recognize peptide-major histocompatibility (MH) (pMH) complexes that are displayed by antigen presenting cells (APC), a prerequisite for efficient T cell adaptive immunity against pathogens. Binding of alpha-beta TR to pMH complex initiates TR-CD3 clustering on the cell surface and intracellular activation of LCK that phosphorylates the ITAM motifs of CD3G, CD3D, CD3E and CD247 enabling the recruitment of ZAP70. In turn, ZAP70 phosphorylates LAT, which recruits numerous signaling molecules to form the LAT signalosome. The LAT signalosome propagates signal branching to three major signaling pathways, the calcium, the mitogen-activated protein kinase (MAPK) kinase and the nuclear factor NF-kappa-B (NF-kB) pathways, leading to the mobilization of transcription factors that are critical for gene expression and essential for T cell growth and differentiation. The T cell repertoire is generated in the thymus, by V-(D)-J rearrangement. This repertoire is then shaped by intrathymic selection events to generate a peripheral T cell pool of self-MH restricted, non-autoaggressive T cells. Post-thymic interaction of alpha-beta TR with the pMH complexes shapes TR structural and functional avidity. The chain is T-cell receptor alpha chain constant from Mus musculus (Mouse).